The primary structure comprises 578 residues: Proline--tRNA ligase (578 aa).

Belongs to the class-II aminoacyl-tRNA synthetase family. ProS type 1 subfamily. In terms of assembly, homodimer.

Its subcellular location is the cytoplasm. It catalyses the reaction tRNA(Pro) + L-proline + ATP = L-prolyl-tRNA(Pro) + AMP + diphosphate. Its function is as follows. Catalyzes the attachment of proline to tRNA(Pro) in a two-step reaction: proline is first activated by ATP to form Pro-AMP and then transferred to the acceptor end of tRNA(Pro). As ProRS can inadvertently accommodate and process non-cognate amino acids such as alanine and cysteine, to avoid such errors it has two additional distinct editing activities against alanine. One activity is designated as 'pretransfer' editing and involves the tRNA(Pro)-independent hydrolysis of activated Ala-AMP. The other activity is designated 'posttransfer' editing and involves deacylation of mischarged Ala-tRNA(Pro). The misacylated Cys-tRNA(Pro) is not edited by ProRS. The polypeptide is Proline--tRNA ligase (Burkholderia cenocepacia (strain ATCC BAA-245 / DSM 16553 / LMG 16656 / NCTC 13227 / J2315 / CF5610) (Burkholderia cepacia (strain J2315))).